A 156-amino-acid polypeptide reads, in one-letter code: Small ribosomal subunit protein uS7 (156 aa).

This sequence belongs to the universal ribosomal protein uS7 family. As to quaternary structure, part of the 30S ribosomal subunit. Contacts proteins S9 and S11.

One of the primary rRNA binding proteins, it binds directly to 16S rRNA where it nucleates assembly of the head domain of the 30S subunit. Is located at the subunit interface close to the decoding center, probably blocks exit of the E-site tRNA. This is Small ribosomal subunit protein uS7 from Ligilactobacillus salivarius (strain UCC118) (Lactobacillus salivarius).